A 206-amino-acid polypeptide reads, in one-letter code: Mediator of RNA polymerase II transcription subunit 19 (206 aa).

The tract at residues 171 to 206 (GTGTKTKKRKYKSNGSSMASPNTELQPDDMKRRRLE) is disordered. Polar residues predominate over residues 183–195 (SNGSSMASPNTEL).

This sequence belongs to the Mediator complex subunit 19 family. In terms of assembly, component of the Mediator complex.

It localises to the nucleus. Its function is as follows. Component of the Mediator complex, a coactivator involved in the regulated transcription of nearly all RNA polymerase II-dependent genes. Mediator functions as a bridge to convey information from gene-specific regulatory proteins to the basal RNA polymerase II transcription machinery. Mediator is recruited to promoters by direct interactions with regulatory proteins and serves as a scaffold for the assembly of a functional preinitiation complex with RNA polymerase II and the general transcription factors. In Kluyveromyces lactis (strain ATCC 8585 / CBS 2359 / DSM 70799 / NBRC 1267 / NRRL Y-1140 / WM37) (Yeast), this protein is Mediator of RNA polymerase II transcription subunit 19 (ROX3).